We begin with the raw amino-acid sequence, 277 residues long: MSLPEHSPLGKPSAYKTEYDASLLFPIPRQPKRTEIGLPEGKPVPFFGVDIWNAYELSWLNLKGKPQVALASFIIPSDTPNIIESKSFKLYLNSFNQTRIASPEALQQLLHHDLSEATGGTVQVRLVTEADLGKQKMGELDGLLLDRLDIEVDRYEPAPELLSADQQESPVEETLVSHLLKSNCLVTGQPDWGSVQIRYVGAPINQEGLLKYLISFRNHNEFHEQCVERIFMDVMRECKPVKLAVYARYTRRGGLDINPFRTNFNTAWPDNKRNARQ.

Ile-83 to Ser-85 is a binding site for substrate. Ser-85–Lys-86 contacts NADPH. The Thioimide intermediate role is filled by Cys-184. Asp-191 serves as the catalytic Proton donor. Residue His-223 to Glu-224 coordinates substrate. Residue Arg-252 to Gly-253 participates in NADPH binding.

Belongs to the GTP cyclohydrolase I family. QueF type 2 subfamily. As to quaternary structure, homodimer.

The protein localises to the cytoplasm. It carries out the reaction 7-aminomethyl-7-carbaguanine + 2 NADP(+) = 7-cyano-7-deazaguanine + 2 NADPH + 3 H(+). It participates in tRNA modification; tRNA-queuosine biosynthesis. Functionally, catalyzes the NADPH-dependent reduction of 7-cyano-7-deazaguanine (preQ0) to 7-aminomethyl-7-deazaguanine (preQ1). In Cupriavidus necator (strain ATCC 17699 / DSM 428 / KCTC 22496 / NCIMB 10442 / H16 / Stanier 337) (Ralstonia eutropha), this protein is NADPH-dependent 7-cyano-7-deazaguanine reductase.